The sequence spans 368 residues: Nicotinate-nucleotide--dimethylbenzimidazole phosphoribosyltransferase (368 aa).

E314 acts as the Proton acceptor in catalysis. The interval 344–368 (DRADGADNSADSGASAGTVASDPTV) is disordered. Over residues 349 to 360 (ADNSADSGASAG) the composition is skewed to low complexity.

The protein belongs to the CobT family.

It catalyses the reaction 5,6-dimethylbenzimidazole + nicotinate beta-D-ribonucleotide = alpha-ribazole 5'-phosphate + nicotinate + H(+). It participates in nucleoside biosynthesis; alpha-ribazole biosynthesis; alpha-ribazole from 5,6-dimethylbenzimidazole: step 1/2. Its function is as follows. Catalyzes the synthesis of alpha-ribazole-5'-phosphate from nicotinate mononucleotide (NAMN) and 5,6-dimethylbenzimidazole (DMB). The sequence is that of Nicotinate-nucleotide--dimethylbenzimidazole phosphoribosyltransferase from Corynebacterium efficiens (strain DSM 44549 / YS-314 / AJ 12310 / JCM 11189 / NBRC 100395).